The primary structure comprises 830 residues: Heavy metal tolerance protein (830 aa).

Residues 1-27 (MVLRYNSPRLNILELVLLYVGFFSIGS) form the signal peptide. 3 helical membrane passes run 51 to 71 (PIGI…VDIS), 88 to 108 (TTVV…ISCA), and 126 to 146 (LSVL…IVYS). An N-linked (GlcNAc...) asparagine glycan is attached at asparagine 150. The next 3 membrane-spanning stretches (helical) occupy residues 156-176 (IVLA…AIYL), 263-283 (FQIF…ILAP), and 304-324 (DVIL…IGSL). In terms of domain architecture, ABC transmembrane type-1 spans 265 to 550 (IFICIVLLFL…FGTLYRSLQN (286 aa)). N-linked (GlcNAc...) asparagine glycosylation is present at asparagine 350. The next 2 helical transmembrane spans lie at 381–401 (VVFQ…YFFI) and 403–423 (FDIY…YVTV). Residues 429-433 (RTEAR), 492-495 (NIVQ), and glycine 542 each bind glutathione. The chain crosses the membrane as a helical span at residues 490 to 511 (FLNIVQGGIFTFSLAIACLLSA). One can recognise an ABC transporter domain in the interval 584–818 (VIFSHVSFAY…DGGAYKKMWF (235 aa)). ATP is bound by residues tyrosine 593 and 617-628 (GESGGGKSTIMR).

This sequence belongs to the ABC transporter superfamily. ABCB family. Heavy Metal importer (TC 3.A.1.210) subfamily.

The protein localises to the vacuole membrane. Its function is as follows. Involved in metal tolerance. Probably involved in the transport of metal-bound phytochelatins. Compartmentalizes cadmium within vacuoles, thereby protecting cells from cadmium toxicity. This Schizosaccharomyces pombe (strain 972 / ATCC 24843) (Fission yeast) protein is Heavy metal tolerance protein (hmt1).